We begin with the raw amino-acid sequence, 412 residues long: Multidrug resistance protein MdtA (412 aa).

The first 21 residues, 1–21 (MKGSNIRRWGAALAVVIIAGA), serve as a signal peptide directing secretion. 2 disordered regions span residues 33–53 (GSGAPAAGQGPQGPGGARHGR) and 389–412 (VVTASSGEQAQPAPRQSGKHGARS).

This sequence belongs to the membrane fusion protein (MFP) (TC 8.A.1) family. Part of a tripartite efflux system composed of MdtA, MdtB and MdtC.

Its subcellular location is the cell inner membrane. The polypeptide is Multidrug resistance protein MdtA (Klebsiella pneumoniae subsp. pneumoniae (strain ATCC 700721 / MGH 78578)).